A 66-amino-acid chain; its full sequence is Large ribosomal subunit protein bL33c (66 aa).

This sequence belongs to the bacterial ribosomal protein bL33 family.

It localises to the plastid. It is found in the chloroplast. The polypeptide is Large ribosomal subunit protein bL33c (Ipomoea purpurea (Common morning glory)).